Reading from the N-terminus, the 539-residue chain is NADH-quinone oxidoreductase subunit N 2 (539 aa).

13 helical membrane-spanning segments follow: residues 11-31, 52-72, 106-126, 141-161, 193-213, 248-268, 296-316, 329-349, 357-377, 385-405, 429-449, 462-484, and 500-520; these read LIPEFLLLAIAAMVLLGDVLT, LMGLGLAFVMVLIQGGFFSWM, PLTHIGRLVFIGAAFVTVILT, LILFATLGMIFMTAGGELIMI, YIFGALSSAILLFGMSLLLGL, GVAILALLFILAGMAYKVAIV, AGFFLLYRVLVTGFGAPSILG, WTSLIAILAALTMLVGNLAAL, MLAYSSIAQAGFLMLGLVGTQ, LMYLIAYTVTNLSAFGILALV, LLLTVAILSLAGIPPLSGFFV, AKWLVIFAVSNTVISLYYYLRFL, and VGFGPGIVMTAITLLIFGLGI.

The protein belongs to the complex I subunit 2 family. As to quaternary structure, NDH-1 is composed of 14 different subunits. Subunits NuoA, H, J, K, L, M, N constitute the membrane sector of the complex.

It is found in the cell membrane. It carries out the reaction a quinone + NADH + 5 H(+)(in) = a quinol + NAD(+) + 4 H(+)(out). Its function is as follows. NDH-1 shuttles electrons from NADH, via FMN and iron-sulfur (Fe-S) centers, to quinones in the respiratory chain. The immediate electron acceptor for the enzyme in this species is believed to be ubiquinone. Couples the redox reaction to proton translocation (for every two electrons transferred, four hydrogen ions are translocated across the cytoplasmic membrane), and thus conserves the redox energy in a proton gradient. This is NADH-quinone oxidoreductase subunit N 2 from Herpetosiphon aurantiacus (strain ATCC 23779 / DSM 785 / 114-95).